Reading from the N-terminus, the 193-residue chain is General stress protein 16U (193 aa).

The protein belongs to the CAPAB/TerDEXZ family.

This chain is General stress protein 16U (yceD), found in Bacillus subtilis (strain 168).